A 506-amino-acid polypeptide reads, in one-letter code: 2-isopropylmalate synthase (506 aa).

Positions 6-267 (IIVFDTTLRD…YTDIVTKEIY (262 aa)) constitute a Pyruvate carboxyltransferase domain. The Mn(2+) site is built by D15, H201, H203, and N237. Residues 391–506 (SIQTLSTSSC…LNSYLSMKNR (116 aa)) form a regulatory domain region.

This sequence belongs to the alpha-IPM synthase/homocitrate synthase family. LeuA type 1 subfamily. In terms of assembly, homodimer. Requires Mn(2+) as cofactor.

The protein resides in the cytoplasm. It catalyses the reaction 3-methyl-2-oxobutanoate + acetyl-CoA + H2O = (2S)-2-isopropylmalate + CoA + H(+). Its pathway is amino-acid biosynthesis; L-leucine biosynthesis; L-leucine from 3-methyl-2-oxobutanoate: step 1/4. In terms of biological role, catalyzes the condensation of the acetyl group of acetyl-CoA with 3-methyl-2-oxobutanoate (2-ketoisovalerate) to form 3-carboxy-3-hydroxy-4-methylpentanoate (2-isopropylmalate). The sequence is that of 2-isopropylmalate synthase from Campylobacter fetus subsp. fetus (strain 82-40).